The chain runs to 551 residues: BAG family molecular chaperone regulator 8, chloroplastic (551 aa).

The span at 1 to 19 shows a compositional bias: basic residues; the sequence is MASHHHHNHNHVCSRHQNH. Residues 1 to 46 form a disordered region; it reads MASHHHHNHNHVCSRHQNHHNNTPQFATSPNCCNKSNHPSPPPAED. The N-terminal 52 residues, 1 to 52, are a transit peptide targeting the chloroplast; that stretch reads MASHHHHNHNHVCSRHQNHHNNTPQFATSPNCCNKSNHPSPPPAEDNLLHLV. Over residues 20 to 38 the composition is skewed to polar residues; it reads HNNTPQFATSPNCCNKSNH. The region spanning 131-160 is the IQ domain; the sequence is RDSAARVIQTHFRSYLVHRSISFRQLKELA. The BAG domain maps to 147–228; sequence VHRSISFRQL…RFVQYVDDCV (82 aa). The interval 246–281 is disordered; it reads GKKPQGFGTSSEDEDNNADMSDDSEEVPVSSIDKRK. Over residues 256–271 the composition is skewed to acidic residues; the sequence is SEDEDNNADMSDDSEE. A Phosphoserine modification is found at Ser332. Disordered regions lie at residues 414–433 and 450–551; these read DEGKRRSSKTGSRVLVKGSG and NVYK…KMEP. Positions 479–499 are enriched in basic and acidic residues; the sequence is GEEKGNVNEVEEIKYVPKENE. Over residues 500 to 513 the composition is skewed to acidic residues; it reads SFEEEEEKETDSEN. The span at 522-534 shows a compositional bias: basic and acidic residues; it reads EGDKRVTKKEVQH.

As to quaternary structure, binds to the ATPase domain of HSP70/HSC70 chaperones.

It is found in the plastid. The protein localises to the chloroplast. In terms of biological role, co-chaperone that regulates diverse cellular pathways, such as programmed cell death and stress responses. This is BAG family molecular chaperone regulator 8, chloroplastic (BAG1) from Arabidopsis thaliana (Mouse-ear cress).